A 267-amino-acid polypeptide reads, in one-letter code: 4,5-DOPA dioxygenase extradiol (267 aa).

Histidine 9, histidine 47, histidine 168, and histidine 222 together coordinate Zn(2+).

Belongs to the DODA-type extradiol aromatic ring-opening dioxygenase family. The cofactor is Zn(2+). Fe(2+) serves as cofactor. Expressed in petals. Not detected in leaves, stems and roots.

Its subcellular location is the cytoplasm. It carries out the reaction L-dopa + O2 = 4-(L-alanin-3-yl)-2-hydroxy-cis,cis-muconate 6-semialdehyde + H(+). It participates in pigment biosynthesis; betalain biosynthesis. Its function is as follows. Opens the cyclic ring of dihydroxy-phenylalanine (DOPA) between carbons 4 and 5, thus producing an unstable seco-DOPA that rearranges nonenzymatically to betalamic acid. Produces mainly (S)-betalamic acid. Required for the coloration of flowers. The protein is 4,5-DOPA dioxygenase extradiol (DOD) of Mirabilis jalapa (Garden four-o'clock).